The following is a 72-amino-acid chain: Translation initiation factor IF-1 (72 aa).

In terms of domain architecture, S1-like spans M1–K72.

This sequence belongs to the IF-1 family. In terms of assembly, component of the 30S ribosomal translation pre-initiation complex which assembles on the 30S ribosome in the order IF-2 and IF-3, IF-1 and N-formylmethionyl-tRNA(fMet); mRNA recruitment can occur at any time during PIC assembly.

It is found in the cytoplasm. Its function is as follows. One of the essential components for the initiation of protein synthesis. Stabilizes the binding of IF-2 and IF-3 on the 30S subunit to which N-formylmethionyl-tRNA(fMet) subsequently binds. Helps modulate mRNA selection, yielding the 30S pre-initiation complex (PIC). Upon addition of the 50S ribosomal subunit IF-1, IF-2 and IF-3 are released leaving the mature 70S translation initiation complex. This is Translation initiation factor IF-1 from Ligilactobacillus salivarius (strain UCC118) (Lactobacillus salivarius).